A 151-amino-acid polypeptide reads, in one-letter code: Flagellar assembly factor FliW 2 (151 aa).

This sequence belongs to the FliW family. In terms of assembly, interacts with translational regulator CsrA and flagellin(s).

The protein resides in the cytoplasm. Its function is as follows. Acts as an anti-CsrA protein, binds CsrA and prevents it from repressing translation of its target genes, one of which is flagellin. Binds to flagellin and participates in the assembly of the flagellum. The sequence is that of Flagellar assembly factor FliW 2 from Desulfotalea psychrophila (strain LSv54 / DSM 12343).